Here is a 238-residue protein sequence, read N- to C-terminus: Ribonuclease PH (238 aa).

Residues Arg86 and 124-126 (GTR) each bind phosphate.

Belongs to the RNase PH family. In terms of assembly, homohexameric ring arranged as a trimer of dimers.

It carries out the reaction tRNA(n+1) + phosphate = tRNA(n) + a ribonucleoside 5'-diphosphate. Its function is as follows. Phosphorolytic 3'-5' exoribonuclease that plays an important role in tRNA 3'-end maturation. Removes nucleotide residues following the 3'-CCA terminus of tRNAs; can also add nucleotides to the ends of RNA molecules by using nucleoside diphosphates as substrates, but this may not be physiologically important. Probably plays a role in initiation of 16S rRNA degradation (leading to ribosome degradation) during starvation. The chain is Ribonuclease PH from Maricaulis maris (strain MCS10) (Caulobacter maris).